Consider the following 321-residue polypeptide: Chitinase-like protein 1 (321 aa).

The first 26 residues, 1–26 (MVTIRSGSIVILVLLAVSFLALVANG), serve as a signal peptide directing secretion. Cysteines 42 and 55 form a disulfide. An N-linked (GlcNAc...) asparagine glycan is attached at Asn-57. A disulfide bridge connects residues Cys-157 and Cys-167. N-linked (GlcNAc...) asparagine glycosylation is found at Asn-208 and Asn-244. A disulfide bond links Cys-267 and Cys-304. Positions 297-321 (GPNDELSCAEQKPFNPSTVPSSSSS) are disordered. Residues 310 to 321 (FNPSTVPSSSSS) are compositionally biased toward polar residues.

Belongs to the glycosyl hydrolase 19 family. Mostly expressed in seedlings shoots and roots, stems, and flowers, and, to a lower extent, in flowers, mature leaves and roots.

The protein resides in the secreted. Functionally, no chitinase activity. Essential for normal plant growth and development. Regulates cell expansion extent and differentiation at least in roots and hypocotyls. Prevents lignin accumulation in the pith. May modulate ethylene-mediated regulation during development. Probably required to establish thermotolerance acclimation. Plays a role for controlled anisotropic cell expansion in the regulation of waving during root gravitropism and thigmotropism. Involved in the root system architecture adaptation to multiple environmental conditions such as nitrate. Contributes to salt tolerance and possibly to drought by preventing the overaccumulation of sodium ions. The protein is Chitinase-like protein 1 (CTL1) of Arabidopsis thaliana (Mouse-ear cress).